Reading from the N-terminus, the 345-residue chain is Alpha-N-acetylneuraminide alpha-2,8-sialyltransferase (345 aa).

At 1 to 15 (MKLQGSRMWLCPRTR) the chain is on the cytoplasmic side. Residues 16 to 36 (LPVGASALGFLILCWLYVFPG) form a helical; Signal-anchor for type II membrane protein membrane-spanning segment. The Lumenal portion of the chain corresponds to 37–345 (YRLPGHKEMV…KKDVSSQKPH (309 aa)). 2 N-linked (GlcNAc...) asparagine glycosylation sites follow: Asn59 and Asn107. Disulfide bonds link Cys126/Cys275 and Cys140/Cys335. Residues Asn131 and Asn154 each contribute to the CMP-N-acetyl-beta-neuraminate site. Residues Asn154 and 176 to 178 (NPS) each bind substrate. The N-linked (GlcNAc...) asparagine glycan is linked to Asn233. Residues Ser262, Thr263, Gly264, Trp284, and His298 each contribute to the CMP-N-acetyl-beta-neuraminate site. 262-264 (STG) is a binding site for substrate. The active-site Proton donor/acceptor is the His310.

It belongs to the glycosyltransferase 29 family.

It is found in the golgi apparatus membrane. It carries out the reaction an N-acetyl-alpha-neuraminyl-(2-&gt;3)-beta-D-galactosyl derivative + CMP-N-acetyl-beta-neuraminate = an N-acetyl-alpha-neuraminyl-(2-&gt;8)-N-acetyl-alpha-neuraminyl-(2-&gt;3)-beta-D-galactosyl derivative + CMP + H(+). The catalysed reaction is a ganglioside GM3 (d18:1(4E)) + CMP-N-acetyl-beta-neuraminate = a ganglioside GD3 (d18:1(4E)) + CMP + H(+). It catalyses the reaction a ganglioside GD3 (d18:1(4E)) + CMP-N-acetyl-beta-neuraminate = a ganglioside GT3 (d18:1(4E)) + CMP + H(+). The enzyme catalyses a ganglioside GD1a (d18:1(4E)) + CMP-N-acetyl-beta-neuraminate = a ganglioside GT1a (d18:1(4E)) + CMP + H(+). It carries out the reaction a ganglioside GT1b (d18:1(4E)) + CMP-N-acetyl-beta-neuraminate = a ganglioside GQ1b (d18:1(4E)) + CMP + H(+). The catalysed reaction is a ganglioside GM1b (d18:1(4E)) + CMP-N-acetyl-beta-neuraminate = a ganglioside GD1c (d18:1(4E)) + CMP + H(+). It catalyses the reaction a ganglioside GD3 + CMP-N-acetyl-beta-neuraminate = a ganglioside GT3 + CMP + H(+). The enzyme catalyses [alpha-N-acetylneuraminyl-(2-&gt;8)](n)-alpha-N-acetylneuraminyl-(2-&gt;8)-alpha-N-acetylneuraminyl-(2-&gt;3)-beta-D-galactosyl-(1-&gt;4)-beta-D-glucosyl-(1&lt;-&gt;1)-ceramide + CMP-N-acetyl-beta-neuraminate = [alpha-N-acetylneuraminyl-(2-&gt;8)](n+1)-alpha-N-acetylneuraminyl-(2-&gt;8)-alpha-N-acetylneuraminyl-(2-&gt;3)-beta-D-galactosyl-(1-&gt;4)-beta-D-glucosyl-(1&lt;-&gt;1)-ceramide + CMP + H(+). The protein operates within protein modification; protein glycosylation. It functions in the pathway lipid metabolism; sphingolipid metabolism. Its function is as follows. Catalyzes the addition of sialic acid in alpha 2,8-linkage to the sialic acid moiety of the ganglioside GM3 to form ganglioside GD3; gangliosides are a subfamily of complex glycosphingolipds that contain one or more residues of sialic acid. Glycosphingolipids are required for convergence extension movements during early development. Can catalyze the addition of a second alpha-2,8- sialic acid to GD3 to form GT3. Can use GM1b, GD1a and GT1b as acceptor substrates to synthesize GD1c, GT1a and GQ1b respectively. The protein is Alpha-N-acetylneuraminide alpha-2,8-sialyltransferase of Xenopus tropicalis (Western clawed frog).